The primary structure comprises 64 residues: Alpha-conotoxin CnIL (64 aa).

The N-terminal stretch at 1-21 (MGMRMMFTVFLLVVLTTTVVS) is a signal peptide. A propeptide spanning residues 22-49 (FPSDSASDGRDDEAKDERSDIYESKRDG) is cleaved from the precursor. 2 disulfides stabilise this stretch: cysteine 51-cysteine 56 and cysteine 52-cysteine 62. Cysteine 62 bears the Cysteine amide mark.

This sequence belongs to the conotoxin A superfamily. In terms of tissue distribution, expressed by the venom duct.

It localises to the secreted. The sequence is that of Alpha-conotoxin CnIL from Conus consors (Singed cone).